We begin with the raw amino-acid sequence, 438 residues long: Putative phospholipase A2 (438 aa).

S257 acts as the Nucleophile in catalysis. Active-site charge relay system residues include D291 and H368.

The protein belongs to the serine esterase family.

It localises to the cytoplasm. The protein localises to the nucleus. The enzyme catalyses a 1-O-alkyl-2-acetyl-sn-glycero-3-phosphocholine + H2O = a 1-O-alkyl-sn-glycero-3-phosphocholine + acetate + H(+). In Schizosaccharomyces pombe (strain 972 / ATCC 24843) (Fission yeast), this protein is Putative phospholipase A2.